A 151-amino-acid polypeptide reads, in one-letter code: Methylated-DNA--protein-cysteine methyltransferase (151 aa).

Cys119 functions as the Nucleophile; methyl group acceptor in the catalytic mechanism.

It belongs to the MGMT family.

It localises to the cytoplasm. The catalysed reaction is a 6-O-methyl-2'-deoxyguanosine in DNA + L-cysteinyl-[protein] = S-methyl-L-cysteinyl-[protein] + a 2'-deoxyguanosine in DNA. It catalyses the reaction a 4-O-methyl-thymidine in DNA + L-cysteinyl-[protein] = a thymidine in DNA + S-methyl-L-cysteinyl-[protein]. Involved in the cellular defense against the biological effects of O6-methylguanine (O6-MeG) and O4-methylthymine (O4-MeT) in DNA. Repairs the methylated nucleobase in DNA by stoichiometrically transferring the methyl group to a cysteine residue in the enzyme. This is a suicide reaction: the enzyme is irreversibly inactivated. This is Methylated-DNA--protein-cysteine methyltransferase from Saccharolobus islandicus (strain Y.N.15.51 / Yellowstone #2) (Sulfolobus islandicus).